Reading from the N-terminus, the 552-residue chain is Glucose-6-phosphate isomerase (552 aa).

Glu357 functions as the Proton donor in the catalytic mechanism. Catalysis depends on residues His388 and Lys516. The disordered stretch occupies residues 525–552; the sequence is ELASTKPPKHDSSTNALIERYRTRGCRS.

The protein belongs to the GPI family.

The protein resides in the cytoplasm. The catalysed reaction is alpha-D-glucose 6-phosphate = beta-D-fructose 6-phosphate. Its pathway is carbohydrate biosynthesis; gluconeogenesis. It participates in carbohydrate degradation; glycolysis; D-glyceraldehyde 3-phosphate and glycerone phosphate from D-glucose: step 2/4. Functionally, catalyzes the reversible isomerization of glucose-6-phosphate to fructose-6-phosphate. The sequence is that of Glucose-6-phosphate isomerase from Laribacter hongkongensis (strain HLHK9).